The sequence spans 221 residues: Serine/arginine-rich splicing factor 2 (221 aa).

Residue Ser2 is modified to N-acetylserine. Position 2 is a phosphoserine (Ser2). The RRM domain occupies 14 to 92 (TSLKVDNLTY…RELRVQMARY (79 aa)). Phosphothreonine occurs at positions 22 and 25. The residue at position 26 (Ser26) is a Phosphoserine. Lys52 bears the N6-acetyllysine mark. Positions 92 to 221 (YGRPPDSHHS…SPEEEGAVSS (130 aa)) are disordered. 2 stretches are compositionally biased toward basic residues: residues 117–171 (RRSR…RSKS) and 179–189 (SRSRSRSRSRS). 7 positions are modified to phosphoserine: Ser189, Ser191, Ser204, Ser206, Ser208, Ser212, and Ser220. Residues 212–221 (SPEEEGAVSS) show a composition bias toward acidic residues.

The protein belongs to the splicing factor SR family. As to quaternary structure, in vitro, self-associates and binds SRSF1/SFRS1 (ASF/SF2), SNRP70 and U2AF1 but not U2AF2. Binds SREK1/SFRS12. Interacts with CCNL1 and CCNL2. Interacts with SCAF11. Interacts with ZRSR2/U2AF1-RS2. Interacts with CCDC55 (via C-terminus). Interacts with BRDT. Post-translationally, extensively phosphorylated on serine residues in the RS domain. Phosphorylated by SRPK2 and this causes its redistribution from the nuclear speckle to nucleoplasm and controls cell fate decision in response to cisplatin treatment. KAT5/TIP60 inhibits its phosphorylation by preventing SRPK2 nuclear translocation. In terms of processing, acetylation on Lys-52 by KAT5/TIP60 promotes its proteasomal degradation. This effect is counterbalanced by HDAC6, which positively controls SRSF2 protein level by deacetylating it and preventing its proteasomal degradation.

The protein localises to the nucleus. It localises to the nucleoplasm. It is found in the nucleus speckle. Necessary for the splicing of pre-mRNA. It is required for formation of the earliest ATP-dependent splicing complex and interacts with spliceosomal components bound to both the 5'- and 3'-splice sites during spliceosome assembly. It also is required for ATP-dependent interactions of both U1 and U2 snRNPs with pre-mRNA. Interacts with other spliceosomal components, via the RS domains, to form a bridge between the 5'- and 3'-splice site binding components, U1 snRNP and U2AF. Binds to purine-rich RNA sequences, either 5'-AGSAGAGTA-3' (S=C or G) or 5'-GTTCGAGTA-3'. Can bind to beta-globin mRNA and commit it to the splicing pathway. The phosphorylated form (by SRPK2) is required for cellular apoptosis in response to cisplatin treatment. In Pan troglodytes (Chimpanzee), this protein is Serine/arginine-rich splicing factor 2 (SRSF2).